The following is a 342-amino-acid chain: Ketol-acid reductoisomerase (NADP(+)) (342 aa).

In terms of domain architecture, KARI N-terminal Rossmann spans 2-181 (VKVYYNGDIK…GGARAGVLET (180 aa)). NADP(+)-binding positions include 25–28 (YGSQ), Arg48, Ser52, and 82–85 (DEQQ). His107 is a catalytic residue. Gly133 is a binding site for NADP(+). In terms of domain architecture, KARI C-terminal knotted spans 182–327 (TFKEETETDL…RQLREMMPFV (146 aa)). Mg(2+) contacts are provided by Asp190, Glu194, Glu226, and Glu230. Ser251 contacts substrate.

It belongs to the ketol-acid reductoisomerase family. It depends on Mg(2+) as a cofactor.

The enzyme catalyses (2R)-2,3-dihydroxy-3-methylbutanoate + NADP(+) = (2S)-2-acetolactate + NADPH + H(+). It carries out the reaction (2R,3R)-2,3-dihydroxy-3-methylpentanoate + NADP(+) = (S)-2-ethyl-2-hydroxy-3-oxobutanoate + NADPH + H(+). Its pathway is amino-acid biosynthesis; L-isoleucine biosynthesis; L-isoleucine from 2-oxobutanoate: step 2/4. The protein operates within amino-acid biosynthesis; L-valine biosynthesis; L-valine from pyruvate: step 2/4. In terms of biological role, involved in the biosynthesis of branched-chain amino acids (BCAA). Catalyzes an alkyl-migration followed by a ketol-acid reduction of (S)-2-acetolactate (S2AL) to yield (R)-2,3-dihydroxy-isovalerate. In the isomerase reaction, S2AL is rearranged via a Mg-dependent methyl migration to produce 3-hydroxy-3-methyl-2-ketobutyrate (HMKB). In the reductase reaction, this 2-ketoacid undergoes a metal-dependent reduction by NADPH to yield (R)-2,3-dihydroxy-isovalerate. In Bacillus velezensis (strain DSM 23117 / BGSC 10A6 / LMG 26770 / FZB42) (Bacillus amyloliquefaciens subsp. plantarum), this protein is Ketol-acid reductoisomerase (NADP(+)).